Here is a 213-residue protein sequence, read N- to C-terminus: Ephrin-A2 (213 aa).

An N-terminal signal peptide occupies residues 1–24 (MAPAQRPLLPLLLLLLPLPPPPFA). One can recognise an Ephrin RBD domain in the interval 34–174 (SDRYAVYWNR…RLKVYVRPTN (141 aa)). N-linked (GlcNAc...) asparagine glycosylation occurs at N42. Cystine bridges form between C73–C114 and C102–C163. N-linked (GlcNAc...) asparagine glycans are attached at residues N174 and N188. N188 carries GPI-anchor amidated asparagine lipidation. Positions 189 to 213 (NSCSSPGGCRLFLSTIPVLWTLLGS) are cleaved as a propeptide — removed in mature form.

Belongs to the ephrin family. Binds to the receptor tyrosine kinases EPHA3, EPHA4 and EPHA5. Interacts with EPHA8; activates EPHA8.

The protein localises to the cell membrane. In terms of biological role, cell surface GPI-bound ligand for Eph receptors, a family of receptor tyrosine kinases which are crucial for migration, repulsion and adhesion during neuronal, vascular and epithelial development. Binds promiscuously Eph receptors residing on adjacent cells, leading to contact-dependent bidirectional signaling into neighboring cells. The signaling pathway downstream of the receptor is referred to as forward signaling while the signaling pathway downstream of the ephrin ligand is referred to as reverse signaling. With the EPHA2 receptor may play a role in bone remodeling through regulation of osteoclastogenesis and osteoblastogenesis. This is Ephrin-A2 (EFNA2) from Homo sapiens (Human).